The sequence spans 315 residues: ATP synthase gamma chain (315 aa).

This sequence belongs to the ATPase gamma chain family. As to quaternary structure, F-type ATPases have 2 components, CF(1) - the catalytic core - and CF(0) - the membrane proton channel. CF(1) has five subunits: alpha(3), beta(3), gamma(1), delta(1), epsilon(1). CF(0) has three main subunits: a, b and c.

The protein resides in the cellular thylakoid membrane. Produces ATP from ADP in the presence of a proton gradient across the membrane. The gamma chain is believed to be important in regulating ATPase activity and the flow of protons through the CF(0) complex. This chain is ATP synthase gamma chain, found in Nostoc punctiforme (strain ATCC 29133 / PCC 73102).